Here is a 685-residue protein sequence, read N- to C-terminus: Bifunctional lycopene cyclase/phytoene synthase (685 aa).

Positions 15 to 255 (TLSYRHFHLL…LVSACFTFDR (241 aa)) are lycopene beta-cyclase. Helical transmembrane passes span 21-41 (FHLL…RPFL), 48-68 (KLIL…NLIV), 92-114 (YFFF…RWAL), 129-149 (LATP…KAAV), 156-176 (YFGM…WGSV), 187-207 (GLAP…ASDV), and 231-251 (LPIE…SACF). Residues 262–685 (QSVAENAPPL…RAVSAVYFGV (424 aa)) are phytoene synthase.

This sequence in the N-terminal section; belongs to the lycopene beta-cyclase family. In the C-terminal section; belongs to the phytoene/squalene synthase family.

Its subcellular location is the membrane. It catalyses the reaction all-trans-lycopene = gamma-carotene. The enzyme catalyses gamma-carotene = all-trans-beta-carotene. It carries out the reaction 2 (2E,6E,10E)-geranylgeranyl diphosphate = 15-cis-phytoene + 2 diphosphate. The protein operates within carotenoid biosynthesis; beta-carotene biosynthesis. Its pathway is carotenoid biosynthesis; phytoene biosynthesis; all-trans-phytoene from geranylgeranyl diphosphate: step 1/1. Its function is as follows. Bifunctional enzyme that catalyzes the reactions from geranylgeranyl diphosphate to phytoene (phytoene synthase) and lycopene to beta-carotene via the intermediate gamma-carotene (lycopene cyclase). This is Bifunctional lycopene cyclase/phytoene synthase from Sporisorium reilianum (strain SRZ2) (Maize head smut fungus).